A 214-amino-acid polypeptide reads, in one-letter code: Late embryogenesis abundant protein At1g64065 (214 aa).

The helical transmembrane segment at 41 to 61 (VYSLTIIVIIFALCLILSSIF) threads the bilayer.

Belongs to the LEA type 2 family.

It localises to the membrane. The protein is Late embryogenesis abundant protein At1g64065 of Arabidopsis thaliana (Mouse-ear cress).